A 94-amino-acid chain; its full sequence is Putative pterin-4-alpha-carbinolamine dehydratase (94 aa).

The protein belongs to the pterin-4-alpha-carbinolamine dehydratase family.

It carries out the reaction (4aS,6R)-4a-hydroxy-L-erythro-5,6,7,8-tetrahydrobiopterin = (6R)-L-erythro-6,7-dihydrobiopterin + H2O. This chain is Putative pterin-4-alpha-carbinolamine dehydratase, found in Caulobacter vibrioides (strain ATCC 19089 / CIP 103742 / CB 15) (Caulobacter crescentus).